The sequence spans 107 residues: Flagellar transcriptional regulator FlhD (107 aa).

It belongs to the FlhD family. As to quaternary structure, homodimer; disulfide-linked. Forms a heterohexamer composed of two FlhC and four FlhD subunits. Each FlhC binds a FlhD dimer, forming a heterotrimer, and a hexamer assembles by dimerization of two heterotrimers.

Its subcellular location is the cytoplasm. Functionally, functions in complex with FlhC as a master transcriptional regulator that regulates transcription of several flagellar and non-flagellar operons by binding to their promoter region. Activates expression of class 2 flagellar genes, including fliA, which is a flagellum-specific sigma factor that turns on the class 3 genes. Also regulates genes whose products function in a variety of physiological pathways. This is Flagellar transcriptional regulator FlhD from Bordetella avium (strain 197N).